Reading from the N-terminus, the 289-residue chain is Syntaxin-3 (289 aa).

At 1 to 263 (MKDRLEQLKA…VKYQSQARKK (263 aa)) the chain is on the cytoplasmic side. Residues 32–111 (MDEFFSEIEE…IEEDEVRSSA (80 aa)) adopt a coiled-coil conformation. Residues 191–253 (LSEIEGRHKD…EKARDETKKA (63 aa)) enclose the t-SNARE coiled-coil homology domain. The chain crosses the membrane as a helical; Anchor for type IV membrane protein span at residues 264–284 (LIIIIVLVVVLLGILALIIGL). At 285–289 (SVGLN) the chain is on the extracellular side.

The protein belongs to the syntaxin family. As to quaternary structure, interacts with REEP6. Interacts with PRPH2 in rod and cone photoreceptors. Interacts with ROM1. Interacts with SNAP25. Interacts with VAMP2. In terms of assembly, interacts with IPO5. Expressed in small intestine, kidney, pancreas, placenta as well as in retina. Weaker expression in lung, liver and heart. Not expressed in brain and skeletal muscle. As to expression, expressed only in the retina. In terms of tissue distribution, ubiquitously expressed.

Its subcellular location is the apical cell membrane. It localises to the nucleus. Functionally, potentially involved in docking of synaptic vesicles at presynaptic active zones. Apical receptor involved in membrane fusion of apical vesicles. In terms of biological role, essential for survival of retinal photoreceetors. Its function is as follows. Functions as a regulator of gene expression. This chain is Syntaxin-3 (STX3), found in Homo sapiens (Human).